The sequence spans 1959 residues: MCDAAAATATTTTTAAVAAAVATTTASVALEATATQPGTTTTTVATASAGTTSPEAAIPTAATATSARNSNSERSARQNCCRLCIAPQTECISIINSYAADKEPLSTKIHNCVGIKVTPQDRLSQQICHACISYLNSWQSFKNRCFSSQAKQRQWLDTNKSKLLNYLDLNSAENGGGGFFDQHLHQQQQHHQHLENELEAEKEKATPTAASTAANILDGIHSLKKRKSLTVYPLPAMPIKDEPIDTDDDYQMKSIDESDDMVDPTMFLERSEHEGDVPLTASDYDYTAQHGVNASSVAASLPPNAVANVAAAGDSKVASCRACSLQFSTRANARRHERNLHPNLFQLSTDSPHNTPITKPTPALAAALEMQRAAAAAATAEANRAAGAAGGNISTQKYRQVVMNAFIKCEGGGYDYDNPEQYRPLLTRDKVEFIEQNDEFLEQYQTMTCRCCNKYFSTYKNFMAHVRKKYPQLPRNLCFNCLKMNDSKALFISHLKKRNCINLFRVLNALRGKTTTVVVPIADDVADDGATGSIPVADAGAGVVAMNSPTVTASGEVVTPGGGSERPEKLRAKELLVNKLYECKLCPKGFRTKHEFRTHVYDKHADVQRKDNNSIQCSFCGLDFADPVDRRRHYNNMDCIVRLRCMTCDAKLETHQRFLDHVYQDHLGGVGGGAVSDNASTTGSGMARSNSMEHSPGKRSLLGALGVGSSAEESRSSSAAPPLTSTPKLAGGNQVGGGGSTSASAAAAAQSSANRDASAPKSQYFSRMPQVCPICGQQYNNYNNVLRHMESKHPNKLPETYKCVRCGLGYPRISYLREHMINVHGVDKNRHSGGFEYIVNADAVKLADGSTPNVYTGRYDYVMKDLMSITNGGTLDDEEEEPGSVAKKMRLDDSSNNSSLVGVASQQKECPICNAVFSNNIGLSNHMRSHYTASNAVNAALAAANRMTPKSLTITATPATDSELGVGGTMSESAPATPANVPPAMANQTPQEQAVFRRSLDQAADRRFRRMRCRICQRRFSSKKSYRYHMLTDHQVQNVQFIKCKLCNAEFAYEKGLKVHLFKVHGKAIKDEMIIKQFECDVCSIVYSSESELQQHKRSVHKLTSASASTSASTSSKIDDDSLMDDGKPTSSDLADLSTLAAGGSTASAPLYWYQCKYCPSNFNTNKKLAIHINSHDEFDSNDYSCKDCGNVYSGRKSLWVHRYKKHPQVPNPAECSLCRKVFFDRQMHDNHTPTCNRKPITSTGAHQQQDGQLHSHHTAKRTIFRHKTGDDDDEEDDDEQQQLEERANSDGNGTTVGVASGSTAAAGTSLKIRIPEVACTICGARFTDQEHFSKHIQKHEQELYVDNPLAAMFDDGPADAGQFQVERQNENGEYACDLCAKTFPQVIALKVHRKWHFRGDSKQNPIDGEATQLTNNNHTTNNNNNNSMHLRELHAVGLMPNQQQQSLNNSCNSSMNHNNNSSSNRSKSMKRKRELKCEYCASTFISNNNLRRHMYELHKHEVSNLPEPPVIVVDDHLTCRRCQLKFDTKELWIEHKLADAKVVRPFCPFQWGCDLCGEYLSRKEKLMNHINNHLKEEVIVPVATKAAIERTAAMESAAADANAAATLSALGEGAETEDQFAEKVEAAGATTTDKLTNPDEEDSDDLDEDSSGDDDDSSGTGDDDDDDDSDDDEDGEGEDEDEEGDGGEGEDEEGVQPPAQLLPQQQHKTDLNLNQDDDDLVEEVISSDDDEDDDGEVESDDDDEDDDDEEDDVEEPEPVGLTVRPLMNGKSKMPPLIVASSDDEDDGVMPIEDIIEEEFDEDADPDPEDAIEEVDEDDLDEGEVEDEPNVVSTASFSESESSTTTTSNSHSHSHSTGERRKKAVDQLNDPGFTCDLCQLCFDSQELLQSHIKSHILNGPKLSTVSAAAAAAAAAATASSKATALLTAAKAKPDSKSAVLANNNNSKTSSKTVAAGATN.

Residues 79-155 (NCCRLCIAPQ…FSSQAKQRQW (77 aa)) form the ZAD domain. Zn(2+) contacts are provided by C81, C84, C128, and C131. The segment at 178 to 208 (GFFDQHLHQQQQHHQHLENELEAEKEKATPT) is disordered. Basic and acidic residues predominate over residues 192-205 (QHLENELEAEKEKA). S228 is subject to Phosphoserine. Position 246 is a phosphothreonine (T246). The segment at 318–341 (ASCRACSLQFSTRANARRHERNLH) adopts a C2H2-type 1 zinc-finger fold. The segment at 447 to 469 (MTCRCCNKYFSTYKNFMAHVRKK) adopts a C2H2-type 2; degenerate zinc-finger fold. The C2H2-type 3 zinc-finger motif lies at 581-604 (YECKLCPKGFRTKHEFRTHVYDKH). Residues 674-762 (AVSDNASTTG…ANRDASAPKS (89 aa)) are disordered. Residues 677–693 (DNASTTGSGMARSNSME) are compositionally biased toward polar residues. S680 carries the post-translational modification Phosphoserine. Composition is skewed to low complexity over residues 716–727 (SSSAAPPLTSTP) and 741–759 (TSAS…DASA). 2 consecutive C2H2-type zinc fingers follow at residues 770-793 (QVCP…ESKH) and 801-824 (YKCV…INVH). Phosphoserine occurs at positions 832, 894, 895, 898, and 899. The segment at 908–930 (KECPICNAVFSNNIGLSNHMRSH) adopts a C2H2-type 6 zinc-finger fold. A disordered region spans residues 960 to 991 (TDSELGVGGTMSESAPATPANVPPAMANQTPQ). C2H2-type zinc fingers lie at residues 1011–1034 (MRCR…LTDH), 1042–1065 (IKCK…FKVH), 1078–1101 (FECD…RSVH), 1154–1176 (YQCK…INSH), and 1184–1207 (YSCK…YKKH). The span at 1233-1253 (TPTCNRKPITSTGAHQQQDGQ) shows a compositional bias: polar residues. The disordered stretch occupies residues 1233-1301 (TPTCNRKPIT…GNGTTVGVAS (69 aa)). Basic residues predominate over residues 1255–1267 (HSHHTAKRTIFRH). The segment covering 1271–1283 (DDDDEEDDDEQQQ) has biased composition (acidic residues). 2 C2H2-type zinc fingers span residues 1318–1340 (VACT…IQKH) and 1375–1397 (YACD…RKWH). Residues 1445-1467 (QQSLNNSCNSSMNHNNNSSSNRS) are compositionally biased toward low complexity. The disordered stretch occupies residues 1445 to 1471 (QQSLNNSCNSSMNHNNNSSSNRSKSMK). 2 consecutive C2H2-type zinc fingers follow at residues 1476–1499 (LKCE…YELH) and 1552–1574 (WGCD…INNH). The tract at residues 1627–1865 (AAGATTTDKL…STGERRKKAV (239 aa)) is disordered. Residues 1639–1695 (PDEEDSDDLDEDSSGDDDDSSGTGDDDDDDDSDDDEDGEGEDEDEEGDGGEGEDEEG) are compositionally biased toward acidic residues. The span at 1697–1715 (QPPAQLLPQQQHKTDLNLN) shows a compositional bias: low complexity. Composition is skewed to acidic residues over residues 1716–1758 (QDDD…EEPE) and 1782–1829 (SDDE…EDEP). A compositionally biased stretch (low complexity) spans 1833-1851 (STASFSESESSTTTTSNSH). The C2H2-type 16 zinc finger occupies 1873 to 1895 (FTCDLCQLCFDSQELLQSHIKSH). The segment at 1933-1959 (PDSKSAVLANNNNSKTSSKTVAAGATN) is disordered. Residues 1942 to 1952 (NNNNSKTSSKT) show a composition bias toward low complexity.

As to expression, expressed ubiquitously in the nervous system, in neurons not glia.

It is found in the nucleus. Functionally, required for normal development of ethanol tolerance. Relies on two distinct molecular pathways: a cellular stress pathway defined by hang, and a parallel pathway requiring octopamine. This is Zinc finger protein hangover (hang) from Drosophila melanogaster (Fruit fly).